Reading from the N-terminus, the 338-residue chain is DNA-directed RNA polymerase subunit alpha (338 aa).

The interval 1-226 is alpha N-terminal domain (alpha-NTD); that stretch reads MLIAQRPTLS…ELFGLARELN (226 aa). The alpha C-terminal domain (alpha-CTD) stretch occupies residues 240–338; the sequence is DEQLAADLAL…DDAFVEDEQY (99 aa).

The protein belongs to the RNA polymerase alpha chain family. In terms of assembly, homodimer. The RNAP catalytic core consists of 2 alpha, 1 beta, 1 beta' and 1 omega subunit. When a sigma factor is associated with the core the holoenzyme is formed, which can initiate transcription.

The catalysed reaction is RNA(n) + a ribonucleoside 5'-triphosphate = RNA(n+1) + diphosphate. In terms of biological role, DNA-dependent RNA polymerase catalyzes the transcription of DNA into RNA using the four ribonucleoside triphosphates as substrates. This is DNA-directed RNA polymerase subunit alpha from Nocardioides sp. (strain ATCC BAA-499 / JS614).